A 196-amino-acid polypeptide reads, in one-letter code: ATP-dependent Clp protease proteolytic subunit (196 aa).

Serine 98 serves as the catalytic Nucleophile. Histidine 123 is an active-site residue.

It belongs to the peptidase S14 family. Fourteen ClpP subunits assemble into 2 heptameric rings which stack back to back to give a disk-like structure with a central cavity, resembling the structure of eukaryotic proteasomes.

The protein resides in the cytoplasm. It catalyses the reaction Hydrolysis of proteins to small peptides in the presence of ATP and magnesium. alpha-casein is the usual test substrate. In the absence of ATP, only oligopeptides shorter than five residues are hydrolyzed (such as succinyl-Leu-Tyr-|-NHMec, and Leu-Tyr-Leu-|-Tyr-Trp, in which cleavage of the -Tyr-|-Leu- and -Tyr-|-Trp bonds also occurs).. In terms of biological role, cleaves peptides in various proteins in a process that requires ATP hydrolysis. Has a chymotrypsin-like activity. Plays a major role in the degradation of misfolded proteins. The chain is ATP-dependent Clp protease proteolytic subunit from Geobacillus sp. (strain WCH70).